Reading from the N-terminus, the 523-residue chain is Translation initiation factor eIF2B subunit delta (523 aa).

The segment at 1-154 (MAAVAVAVRE…EHTQADDPTL (154 aa)) is disordered. Alanine 2 bears the N-acetylalanine mark. Phosphoserine is present on serine 12. Residues 31-40 (MTQEEKLQLR) are compositionally biased toward basic and acidic residues. Residues 41–51 (KEKKQQKKKRK) show a composition bias toward basic residues. Threonine 85 carries the post-translational modification Phosphothreonine. Residues 95–120 (TKAELRAERRAKQEAERALKQARKGE) are compositionally biased toward basic and acidic residues. Residue serine 129 is modified to Phosphoserine. The segment at 170-179 (RKDYGSKVSL) is may bind the chemical integrated stress response (ISR) inhibitor ISRIB.

The protein belongs to the eIF-2B alpha/beta/delta subunits family. As to quaternary structure, component of the translation initiation factor 2B (eIF2B) complex which is a heterodecamer of two sets of five different subunits: alpha, beta, gamma, delta and epsilon. Subunits alpha, beta and delta comprise a regulatory subcomplex and subunits epsilon and gamma comprise a catalytic subcomplex. Within the complex, the hexameric regulatory complex resides at the center, with the two heterodimeric catalytic subcomplexes bound on opposite sides.

The protein resides in the cytoplasm. It localises to the cytosol. With respect to regulation, activated by the chemical integrated stress response (ISR) inhibitor ISRIB which stimulates guanine nucleotide exchange factor activity for both phosphorylated and unphosphorylated eIF2. Its function is as follows. Acts as a component of the translation initiation factor 2B (eIF2B) complex, which catalyzes the exchange of GDP for GTP on eukaryotic initiation factor 2 (eIF2) gamma subunit. Its guanine nucleotide exchange factor activity is repressed when bound to eIF2 complex phosphorylated on the alpha subunit, thereby limiting the amount of methionyl-initiator methionine tRNA available to the ribosome and consequently global translation is repressed. This chain is Translation initiation factor eIF2B subunit delta (EIF2B4), found in Oryctolagus cuniculus (Rabbit).